A 345-amino-acid chain; its full sequence is Nuclear distribution protein nudE-like 1 (345 aa).

Positions 28-190 (QSFQEARDEL…LAVRERQQEV (163 aa)) form a coiled coil. Residues 56 to 166 (VQAEQRNRDL…LDEKESLLVS (111 aa)) form a self-association region. Positions 64–189 (DLQADNQRLK…ELAVRERQQE (126 aa)) are interaction with KATNB1. The tract at residues 114 to 133 (YVRELEQANDDLERAKRATI) is required for interaction with PAFAH1B1. The tract at residues 175-345 (RDLRQELAVR…SAPGMLPLSV (171 aa)) is interaction with CENPF. Positions 189–256 (EVTRKSAPSS…SARISALNIV (68 aa)) are interaction with YWHAE. The interaction with NEFL stretch occupies residues 191–345 (TRKSAPSSPT…SAPGMLPLSV (155 aa)). Residues 195–256 (APSSPTLDCE…SARISALNIV (62 aa)) form an interaction with KATNA1 region. A Phosphoserine modification is found at S215. Residue T219 is modified to Phosphothreonine; by CDK1 and MAPK1. At S231 the chain carries Phosphoserine. The interval 241 to 280 (TSPLTPSARISALNIVGDLLRKVGALESKLAACRNFAKDQ) is interaction with DISC1. The residue at position 242 (S242) is a Phosphoserine; by CDK1. T245 carries the post-translational modification Phosphothreonine; by CDK1 and MAPK1. The required for localization to the centrosome and interaction with dynein, dynactin, tubulin gamma, PCM1 and PCNT stretch occupies residues 256–291 (VGDLLRKVGALESKLAACRNFAKDQASRKSYISGNV). The S-palmitoyl cysteine; by ZDHHC2, ZDHHC3 and ZDHHC7 moiety is linked to residue C273. The tract at residues 315-345 (GAVNGFDPAPPPPGLGSSRPSSAPGMLPLSV) is disordered. Positions 329-339 (LGSSRPSSAPG) are enriched in low complexity. At S344 the chain carries Phosphoserine.

Belongs to the nudE family. As to quaternary structure, self-associates. Interacts with DISC1, dynein, dynactin, tubulin gamma, KATNA1, KATNB1, microtubules, PAFAH1B1, PCM1, PCNT, and YWHAE. Interacts directly with NEFL and indirectly with NEFH. Interacts (via C-terminus) with CENPF. Interacts with ZNF365. Interacts with PLEKHM1 (via N- and C-terminus). Interacts with GTP-bound RAB9A; the interaction may lead to RAB9A-dynein motor tethering. In terms of processing, phosphorylated in mitosis. Can be phosphorylated by CDK1, CDK5 and MAPK1. Phosphorylation by CDK5 promotes interaction with KATNA1 and YWHAE. Post-translationally, palmitoylation at Cys-273 reduces affinity for dynein.

Its subcellular location is the cytoplasm. It is found in the cytoskeleton. The protein resides in the microtubule organizing center. It localises to the centrosome. The protein localises to the chromosome. Its subcellular location is the centromere. It is found in the kinetochore. The protein resides in the spindle. Its function is as follows. Required for organization of the cellular microtubule array and microtubule anchoring at the centrosome. May regulate microtubule organization at least in part by targeting the microtubule severing protein KATNA1 to the centrosome. Also positively regulates the activity of the minus-end directed microtubule motor protein dynein. May enhance dynein-mediated microtubule sliding by targeting dynein to the microtubule plus ends. Required for several dynein- and microtubule-dependent processes such as the maintenance of Golgi integrity, the centripetal motion of secretory vesicles and the coupling of the nucleus and centrosome. Also required during brain development for the migration of newly formed neurons from the ventricular/subventricular zone toward the cortical plate. Plays a role, together with DISC1, in the regulation of neurite outgrowth. Required for mitosis in some cell types but appears to be dispensible for mitosis in cortical neuronal progenitors, which instead requires NDE1. Facilitates the polymerization of neurofilaments from the individual subunits NEFH and NEFL. Positively regulates lysosome peripheral distribution and ruffled border formation in osteoclasts. Plays a role, together with DISC1, in the regulation of neurite outgrowth. May act as a RAB9A/B effector that tethers RAB9-associated late endosomes to the dynein motor for their retrograde transport to the trans-Golgi network. The chain is Nuclear distribution protein nudE-like 1 (NDEL1) from Pongo abelii (Sumatran orangutan).